Consider the following 569-residue polypeptide: Urease subunit beta (569 aa).

In terms of domain architecture, Urease spans 131–569; the sequence is GGIDTHIHFI…VSLAQLFSIF (439 aa). Ni(2+) is bound by residues histidine 136, histidine 138, and lysine 219. An N6-carboxylysine modification is found at lysine 219. Position 221 (histidine 221) interacts with substrate. The Ni(2+) site is built by histidine 248 and histidine 274. The active-site Proton donor is histidine 322. Residue aspartate 362 coordinates Ni(2+).

It belongs to the metallo-dependent hydrolases superfamily. Urease alpha subunit family. As to quaternary structure, heterohexamer of 3 UreA (alpha) and 3 UreB (beta) subunits. Requires Ni cation as cofactor. Post-translationally, carboxylation allows a single lysine to coordinate two nickel ions.

It is found in the cytoplasm. It carries out the reaction urea + 2 H2O + H(+) = hydrogencarbonate + 2 NH4(+). It participates in nitrogen metabolism; urea degradation; CO(2) and NH(3) from urea (urease route): step 1/1. The sequence is that of Urease subunit beta from Helicobacter pylori (strain P12).